A 71-amino-acid polypeptide reads, in one-letter code: UPF0346 protein SPT_1257 (71 aa).

It belongs to the UPF0346 family.

This is UPF0346 protein SPT_1257 from Streptococcus pneumoniae (strain Taiwan19F-14).